A 235-amino-acid chain; its full sequence is Phosphoribosylaminoimidazole-succinocarboxamide synthase (235 aa).

This sequence belongs to the SAICAR synthetase family.

The catalysed reaction is 5-amino-1-(5-phospho-D-ribosyl)imidazole-4-carboxylate + L-aspartate + ATP = (2S)-2-[5-amino-1-(5-phospho-beta-D-ribosyl)imidazole-4-carboxamido]succinate + ADP + phosphate + 2 H(+). The protein operates within purine metabolism; IMP biosynthesis via de novo pathway; 5-amino-1-(5-phospho-D-ribosyl)imidazole-4-carboxamide from 5-amino-1-(5-phospho-D-ribosyl)imidazole-4-carboxylate: step 1/2. The polypeptide is Phosphoribosylaminoimidazole-succinocarboxamide synthase (Streptococcus sanguinis (strain SK36)).